The chain runs to 212 residues: Pyridoxine/pyridoxamine 5'-phosphate oxidase (212 aa).

Residues 8 to 11 (RRTY) and Lys-66 each bind substrate. Residues 61-66 (RIVLLK), 76-77 (FT), Arg-82, Lys-83, and Gln-105 contribute to the FMN site. Residues Tyr-123, Arg-127, and Ser-131 each contribute to the substrate site. Residues 140-141 (QS) and Trp-184 each bind FMN. 190-192 (RLH) lines the substrate pocket. An FMN-binding site is contributed by Arg-194.

This sequence belongs to the pyridoxamine 5'-phosphate oxidase family. As to quaternary structure, homodimer. Requires FMN as cofactor.

It catalyses the reaction pyridoxamine 5'-phosphate + O2 + H2O = pyridoxal 5'-phosphate + H2O2 + NH4(+). The catalysed reaction is pyridoxine 5'-phosphate + O2 = pyridoxal 5'-phosphate + H2O2. It participates in cofactor metabolism; pyridoxal 5'-phosphate salvage; pyridoxal 5'-phosphate from pyridoxamine 5'-phosphate: step 1/1. The protein operates within cofactor metabolism; pyridoxal 5'-phosphate salvage; pyridoxal 5'-phosphate from pyridoxine 5'-phosphate: step 1/1. Its function is as follows. Catalyzes the oxidation of either pyridoxine 5'-phosphate (PNP) or pyridoxamine 5'-phosphate (PMP) into pyridoxal 5'-phosphate (PLP). This chain is Pyridoxine/pyridoxamine 5'-phosphate oxidase, found in Cupriavidus taiwanensis (strain DSM 17343 / BCRC 17206 / CCUG 44338 / CIP 107171 / LMG 19424 / R1) (Ralstonia taiwanensis (strain LMG 19424)).